A 401-amino-acid polypeptide reads, in one-letter code: Probable 2,3-bisphosphoglycerate-independent phosphoglycerate mutase (401 aa).

This sequence belongs to the BPG-independent phosphoglycerate mutase family. A-PGAM subfamily.

It catalyses the reaction (2R)-2-phosphoglycerate = (2R)-3-phosphoglycerate. Its pathway is carbohydrate degradation; glycolysis; pyruvate from D-glyceraldehyde 3-phosphate: step 3/5. In terms of biological role, catalyzes the interconversion of 2-phosphoglycerate and 3-phosphoglycerate. In Thermotoga neapolitana (strain ATCC 49049 / DSM 4359 / NBRC 107923 / NS-E), this protein is Probable 2,3-bisphosphoglycerate-independent phosphoglycerate mutase.